Reading from the N-terminus, the 211-residue chain is Outer-membrane lipoprotein carrier protein (211 aa).

The N-terminal stretch at Met-1–Ala-24 is a signal peptide.

This sequence belongs to the LolA family. As to quaternary structure, monomer.

It is found in the periplasm. In terms of biological role, participates in the translocation of lipoproteins from the inner membrane to the outer membrane. Only forms a complex with a lipoprotein if the residue after the N-terminal Cys is not an aspartate (The Asp acts as a targeting signal to indicate that the lipoprotein should stay in the inner membrane). The sequence is that of Outer-membrane lipoprotein carrier protein from Cupriavidus taiwanensis (strain DSM 17343 / BCRC 17206 / CCUG 44338 / CIP 107171 / LMG 19424 / R1) (Ralstonia taiwanensis (strain LMG 19424)).